The sequence spans 290 residues: Arylamine N-acetyltransferase, pineal gland isozyme NAT-3 (290 aa).

C68 serves as the catalytic Acyl-thioester intermediate. Residues H107 and D122 contribute to the active site.

This sequence belongs to the arylamine N-acetyltransferase family.

The catalysed reaction is an arylamine + acetyl-CoA = an N-acetylarylamine + CoA. It catalyses the reaction an N-hydroxyarylamine + acetyl-CoA = an N-acetoxyarylamine + CoA. Functionally, catalyzes the N- or O-acetylation of various arylamine and heterocyclic amine substrates, and participates in the detoxification of a plethora of hydrazine and arylamine drugs. This Gallus gallus (Chicken) protein is Arylamine N-acetyltransferase, pineal gland isozyme NAT-3.